The sequence spans 285 residues: Inositol oxygenase (285 aa).

Arg29 contributes to the substrate binding site. Ser33 carries the post-translational modification Phosphoserine. Substrate is bound at residue 85–87 (DES). Positions 98, 123, and 124 each coordinate Fe cation. Residues Lys127 and 141 to 142 (GD) contribute to the substrate site. 3 residues coordinate Fe cation: His194, His220, and Asp253. 220-221 (HS) serves as a coordination point for substrate.

The protein belongs to the myo-inositol oxygenase family. Fe cation is required as a cofactor. Kidney specific.

The protein resides in the cytoplasm. It carries out the reaction myo-inositol + O2 = D-glucuronate + H2O + H(+). It participates in polyol metabolism; myo-inositol degradation into D-glucuronate; D-glucuronate from myo-inositol: step 1/1. This Rattus norvegicus (Rat) protein is Inositol oxygenase (Miox).